A 435-amino-acid polypeptide reads, in one-letter code: Diaminobutyrate--2-oxoglutarate transaminase (435 aa).

N6-(pyridoxal phosphate)lysine is present on Lys266.

It belongs to the class-III pyridoxal-phosphate-dependent aminotransferase family. Pyridoxal 5'-phosphate is required as a cofactor.

The catalysed reaction is L-2,4-diaminobutanoate + 2-oxoglutarate = L-aspartate 4-semialdehyde + L-glutamate. It functions in the pathway amine and polyamine biosynthesis; ectoine biosynthesis; L-ectoine from L-aspartate 4-semialdehyde: step 1/3. Its function is as follows. Catalyzes reversively the conversion of L-aspartate beta-semialdehyde (ASA) to L-2,4-diaminobutyrate (DABA) by transamination with L-glutamate. The chain is Diaminobutyrate--2-oxoglutarate transaminase (ectB) from Bordetella bronchiseptica (strain ATCC BAA-588 / NCTC 13252 / RB50) (Alcaligenes bronchisepticus).